We begin with the raw amino-acid sequence, 155 residues long: Ribosomal RNA large subunit methyltransferase H (155 aa).

Residues Gly-104 and 123-128 contribute to the S-adenosyl-L-methionine site; that span reads LSAMTF.

The protein belongs to the RNA methyltransferase RlmH family. In terms of assembly, homodimer.

It localises to the cytoplasm. The enzyme catalyses pseudouridine(1915) in 23S rRNA + S-adenosyl-L-methionine = N(3)-methylpseudouridine(1915) in 23S rRNA + S-adenosyl-L-homocysteine + H(+). Functionally, specifically methylates the pseudouridine at position 1915 (m3Psi1915) in 23S rRNA. The chain is Ribosomal RNA large subunit methyltransferase H from Oleidesulfovibrio alaskensis (strain ATCC BAA-1058 / DSM 17464 / G20) (Desulfovibrio alaskensis).